We begin with the raw amino-acid sequence, 564 residues long: MTETAKRPLYVPHAGPSLLEMPLLNKGSAFSTQERIDFNLQGLLPHNIETIEEQTERAYSQYNLCNTDLDRHIFLRSIQDNNETLFFRLLEEHLEEMMPIIYTPTVGQACQEFSKIYRTHRGLFISYPDRERIDDILRSATKNNVKIVVVTDSERILGLGDQGIGGMGIPIGKLSLYTACGGISPAYTLPVVLDVGTNNPDLLNDPMYMGWRHERVSGAQYEEFVDLFIQAIKRRWPNVLLQFEDFAQTNAMPLLERYKDELCCFNDDIQGTAAVAVGTLLAACKAKGEKLSEQTVTFVGAGSAGCGIAEQIIAAMQLEGLDEAQARRRIFMVDRWGLLTDDMSNLLDFQHRLAQKRADLGAWGGQQGDDLALLEVIRNARPTVLIGVSGQRGLFSEEVIRELHSHCKQPLVMPLSNPTSRVEATPQEILNWTDGQALVATGSPFQPVQVGDKRIPIAQCNNAYIFPGIGLGVIAVRANRVTEGMLMAAANALANCSPIVTQGEGAVLPALGDIREVSKRIAVAVAKQAQAEGKALHTSDEVLNDAIEANFWFPRYRAYRRTSF.

Tyr102 (proton donor) is an active-site residue. An NAD(+)-binding site is contributed by Arg155. Lys173 acts as the Proton acceptor in catalysis. A divalent metal cation is bound by residues Glu244, Asp245, and Asp268. Positions 268 and 417 each coordinate NAD(+).

This sequence belongs to the malic enzymes family. Homotetramer. Mg(2+) serves as cofactor. Requires Mn(2+) as cofactor.

It catalyses the reaction (S)-malate + NAD(+) = pyruvate + CO2 + NADH. The catalysed reaction is oxaloacetate + H(+) = pyruvate + CO2. In Pseudomonas aeruginosa (strain LESB58), this protein is NAD-dependent malic enzyme.